Here is a 401-residue protein sequence, read N- to C-terminus: Nodal homolog 3-C (401 aa).

The first 18 residues, 1–18 (MAFLSLFLCLVFSSPLMA), serve as a signal peptide directing secretion. Positions 19 to 274 (MPPALQGRKA…KVNGFRRLRR (256 aa)) are excised as a propeptide. N-linked (GlcNAc...) asparagine glycans are attached at residues asparagine 168, asparagine 337, and asparagine 344. 2 disulfide bridges follow: cysteine 299–cysteine 365 and cysteine 328–cysteine 396.

The protein belongs to the TGF-beta family. Monomer. The propeptide region interacts with bmp4 in a non-covalent manner. Expressed in the dorsal marginal region of late blastula, becoming restricted to the Spemann organizer at the early gastrula stage.

It is found in the secreted. In terms of biological role, exhibits mesoderm-dorsalizing activity and neural-inducing activity, but lacks mesoderm-inducing activity. Regulates the expression of specific mesodermal and neural genes. Induces convergent extension movements at the embryonic midline by activating the fgf signaling pathway to induce t/bra expression in the organizer region. Acts with wnt11 to induce Spemann organizer cells and induce axis formation. The unprocessed protein antagonizes bmp-signaling. This chain is Nodal homolog 3-C, found in Xenopus tropicalis (Western clawed frog).